Here is a 309-residue protein sequence, read N- to C-terminus: Taste receptor type 2 member 113 (309 aa).

Topologically, residues 1–10 (MVAVLQSTLP) are extracellular. The helical transmembrane segment at 11–31 (IIFSMEFIMGTLGNGFIFLIV) threads the bilayer. At 32–55 (CIDWVQRRKISLVDQIRTALAISR) the chain is on the cytoplasmic side. The helical transmembrane segment at 56-76 (IALIWLIFLDWWVSVHYPALH) threads the bilayer. Residues 77–80 (ETGK) lie on the Extracellular side of the membrane. The helical transmembrane segment at 81-101 (MLSTYLISWTVINHCNFWLTA) threads the bilayer. Residues 102-127 (NLSILYFLKIANFSNIIFLYLKFRSK) are Cytoplasmic-facing. Residues 128–148 (NVVLVTLLVSLFFLFLNTVII) traverse the membrane as a helical segment. Topologically, residues 149 to 185 (KIFSDVCFDSVQRNVSQIFIMYNHEQICKFLSFTNPM) are extracellular. N-linked (GlcNAc...) asparagine glycosylation occurs at Asn-162. The chain crosses the membrane as a helical span at residues 186 to 206 (FTFIPFVMSTVMFSLLIFSLW). The Cytoplasmic segment spans residues 207-229 (RHLKNMQHTAKGCRDISTTVHIR). The helical transmembrane segment at 230–250 (ALQTIIVSVVLYTIFFLSFFV) threads the bilayer. Over 251–262 (KVWSFVSPERYL) the chain is Extracellular. Residues 263 to 283 (IFLFVWALGNAVFSAHPFVMI) form a helical membrane-spanning segment. The Cytoplasmic segment spans residues 284 to 309 (LVNRRLRLASLSLIFWLWYRFKNIEV).

This sequence belongs to the G-protein coupled receptor T2R family.

The protein localises to the membrane. Its function is as follows. Putative taste receptor which may play a role in the perception of bitterness. This chain is Taste receptor type 2 member 113, found in Mus musculus (Mouse).